The following is a 2162-amino-acid chain: Calpain-type cysteine protease ADL1 (2162 aa).

An N-terminal signal peptide occupies residues 1-33 (MEEEEHRGVVLVCSICGFLFAVLGPLSFWILWA). Over 34–70 (VNWRPWRLYSWIYARKWPAYVQGPQLSTLCSFFTLFA) the chain is Extracellular. A helical membrane pass occupies residues 71–91 (WLVVVSPITVLLVWGGILIAL). Topologically, residues 92-95 (LERN) are cytoplasmic. A helical membrane pass occupies residues 96 to 116 (IIGLAVIMVGVALLLSFYSIM). At 117–127 (LWWRTQWQSSK) the chain is on the extracellular side. Residues 128–148 (AVAYLLLLAVGLLCAYEFCAV) traverse the membrane as a helical segment. Residues 149 to 164 (YVTTGASASELNSPSG) lie on the Cytoplasmic side of the membrane. A helical transmembrane segment spans residues 165 to 185 (FFFGVSAISLAINMLFISKIL). Topologically, residues 186 to 236 (FNGSGFDVDEYVRRLYKFAYSDCVEVAPVSCSPDPPDPSELYMTKSSRVLH) are extracellular. A helical transmembrane segment spans residues 237–257 (LGLLYLCSLMVLVVYSILYGL). Topologically, residues 258–264 (TSKEARW) are cytoplasmic. The chain crosses the membrane as a helical span at residues 265-285 (LGALTSVAVVILDWNLGLCSF). At 286-294 (RFELLKSRM) the chain is on the extracellular side. Residues 295 to 315 (IALFVAGTSRVFLICFGVHYW) traverse the membrane as a helical segment. At 316 to 320 (YLGHC) the chain is on the cytoplasmic side. The chain crosses the membrane as a helical span at residues 321–341 (ISYAFVASVLLAAAVSCWLSI). The Extracellular segment spans residues 342 to 626 (SNPSVARIDA…LMFHQVAGSP (285 aa)). Residues 366–403 (KGQTSSSNSSDGCGSSVKRSSGSVEAGPHGNATDSMYR) form a disordered region. Over residues 370-381 (SSSNSSDGCGSS) the composition is skewed to low complexity. A helical transmembrane segment spans residues 627-647 (IRAFVVFTLIFIIETVTVAVH). Residues 648 to 663 (RPKPIKVINATHEQFE) lie on the Cytoplasmic side of the membrane. A helical membrane pass occupies residues 664–684 (FGFSILLLSPVVCSIMAFIWS). Over 685 to 697 (LCAEEMTMTSKPR) the chain is Extracellular. A helical transmembrane segment spans residues 698-718 (KYGFIAWLLSTCVGLLLSFLS). Over 719 to 722 (KSSV) the chain is Cytoplasmic. The chain crosses the membrane as a helical span at residues 723 to 743 (ILGLSLTVPLMVACLSFAIPI). The Extracellular portion of the chain corresponds to 744 to 773 (WMRNGYRFWIPGGELDSRENIRQAPGKKER). The helical transmembrane segment at 774-794 (ALFAISITVFTASVIGLGAIV) threads the bilayer. Topologically, residues 795–825 (SAKPLDALGYKGWDADKKSFYSPYATSMYLG) are cytoplasmic. A helical transmembrane segment spans residues 826-846 (WALSSTIAVLATGVIPIVAWF). The Extracellular segment spans residues 847-856 (ATYRFSPSSA). A helical membrane pass occupies residues 857–877 (ICVGLFATVLVSFCGVSYWGV). Topologically, residues 878 to 890 (VNSRQDGVPLKAD) are cytoplasmic. Residues 891–911 (FLAALLPLLCIPAVFSLFTGM) traverse the membrane as a helical segment. Over 912-924 (YKWKDDDWKISRG) the chain is Extracellular. The helical transmembrane segment at 925–945 (VYLFVGMGVLLLLGAISAVIV) threads the bilayer. Over 946-949 (TIRP) the chain is Cytoplasmic. The chain crosses the membrane as a helical span at residues 950–970 (WTVGVACLLVILFLVFAIGVI). At 971-984 (HYWTSNNFYLTRTQ) the chain is on the extracellular side. Residues 985–1005 (MLLVCSLAFLLALAAFLMGLF) traverse the membrane as a helical segment. Residues 1006–1019 (QEKPFVGASIGYFS) are Cytoplasmic-facing. Residues 1020 to 1040 (FLFLLTGRALTVLLSPPIVVY) traverse the membrane as a helical segment. Topologically, residues 1041–1063 (SPRVLPVYVYDAHADSAKNVSYA) are extracellular. Residues 1064–1084 (FLILYGIALATEVWGVIASLI) form a helical membrane-spanning segment. At 1085–2162 (LNPPFIGAAI…TKAPIKLEAV (1078 aa)) the chain is on the cytoplasmic side. Residues Ser1372 and Ser1377 each carry the phosphoserine modification. Residues 1418–1611 (TGRHCGEIDL…ICSAEYGLFD (194 aa)) enclose the Calpain catalytic 1 domain. The residue at position 1668 (Ser1668) is a Phosphoserine. The region spanning 1706–2008 (NFTDQEFPPD…FRSIYVCRVY (303 aa)) is the Calpain catalytic 2 domain. Catalysis depends on residues Cys1772, His1930, and Asn1950.

The protein belongs to the peptidase C2 family. Post-translationally, autocatalytic proteolytic cleavage leading to the production of mainly cytoplasmic localized subproducts of about 85 and 120 kDa. Ubiquitously expressed with higher levels in embryos, vasculatures, leaf primordia, leaf margins, and shoot apical meristem (SAM).

The protein localises to the endoplasmic reticulum membrane. It is found in the cytoplasm. It localises to the cell membrane. The protein resides in the endosome membrane. Functionally, essential protease involved in epiderm development. Required for aleurone cell development in the endosperm probably by maintaining and restricting the aleurone and embryonic epidermal L1 cell-layer fates as well as meristems organization. Involved in the maintenance of adaxial/abaxial axis information in developing leaves, probably by regulating cell proliferation and expansion. Does not need calcium ions to be active. The sequence is that of Calpain-type cysteine protease ADL1 (ADL1) from Oryza sativa subsp. japonica (Rice).